The primary structure comprises 137 residues: Large ribosomal subunit protein uL16 (137 aa).

It belongs to the universal ribosomal protein uL16 family. As to quaternary structure, part of the 50S ribosomal subunit.

Its function is as follows. Binds 23S rRNA and is also seen to make contacts with the A and possibly P site tRNAs. This chain is Large ribosomal subunit protein uL16, found in Stutzerimonas stutzeri (strain A1501) (Pseudomonas stutzeri).